The following is a 194-amino-acid chain: MRLTDLEIAACLEEGSIVIDPRPDAEAISGVSVDVKLGNQFRVFQDHTAPYIDLSGPSSEVQEALDRVMSDKIVIPEGEAFFLHPGELALAVTHESLTLPADIVGWLDGRSSLARLGLMVHVTAHRIDPGWQGKIVLEFFNSGKLPLALKPMMTIGALNFERLSSPVARPYNKRKSAKYRDQQEAVASRISQDK.

Residues 110 to 115 (RSSLAR), Asp128, 136 to 138 (VLE), Tyr171, Lys178, and Gln182 contribute to the dCTP site. Catalysis depends on Glu138, which acts as the Proton donor/acceptor. The tract at residues 172 to 194 (NKRKSAKYRDQQEAVASRISQDK) is disordered.

Belongs to the dCTP deaminase family. In terms of assembly, homotrimer.

The enzyme catalyses dCTP + H2O + H(+) = dUTP + NH4(+). It functions in the pathway pyrimidine metabolism; dUMP biosynthesis; dUMP from dCTP (dUTP route): step 1/2. Functionally, catalyzes the deamination of dCTP to dUTP. The chain is dCTP deaminase from Shewanella loihica (strain ATCC BAA-1088 / PV-4).